The following is a 479-amino-acid chain: Ribosomal protein uS12 methylthiotransferase RimO (479 aa).

The tract at residues 1–34 is disordered; sequence MTVNTFDPSKASPVTHASDSASKTPEPNAVAAPS. Over residues 15 to 25 the composition is skewed to polar residues; that stretch reads THASDSASKTP. The MTTase N-terminal domain occupies 39 to 151; sequence NRVGFVSLGC…VMGAVHGYIP (113 aa). [4Fe-4S] cluster contacts are provided by C48, C84, C113, C184, C188, and C191. Positions 170 to 407 constitute a Radical SAM core domain; sequence LTPRHYAYLK…METQQAISAA (238 aa). One can recognise a TRAM domain in the interval 410–476; that stretch reads KQKVGYEMDV…DYDLTGIAVE (67 aa).

This sequence belongs to the methylthiotransferase family. RimO subfamily. The cofactor is [4Fe-4S] cluster.

Its subcellular location is the cytoplasm. The enzyme catalyses L-aspartate(89)-[ribosomal protein uS12]-hydrogen + (sulfur carrier)-SH + AH2 + 2 S-adenosyl-L-methionine = 3-methylsulfanyl-L-aspartate(89)-[ribosomal protein uS12]-hydrogen + (sulfur carrier)-H + 5'-deoxyadenosine + L-methionine + A + S-adenosyl-L-homocysteine + 2 H(+). In terms of biological role, catalyzes the methylthiolation of an aspartic acid residue of ribosomal protein uS12. This chain is Ribosomal protein uS12 methylthiotransferase RimO, found in Saccharophagus degradans (strain 2-40 / ATCC 43961 / DSM 17024).